The chain runs to 144 residues: 3-hydroxyacyl-[acyl-carrier-protein] dehydratase FabZ (144 aa).

His51 is a catalytic residue.

The protein belongs to the thioester dehydratase family. FabZ subfamily.

It is found in the cytoplasm. The catalysed reaction is a (3R)-hydroxyacyl-[ACP] = a (2E)-enoyl-[ACP] + H2O. Functionally, involved in unsaturated fatty acids biosynthesis. Catalyzes the dehydration of short chain beta-hydroxyacyl-ACPs and long chain saturated and unsaturated beta-hydroxyacyl-ACPs. The protein is 3-hydroxyacyl-[acyl-carrier-protein] dehydratase FabZ of Clostridium botulinum (strain Loch Maree / Type A3).